A 1075-amino-acid chain; its full sequence is Error-prone DNA polymerase (1075 aa).

This sequence belongs to the DNA polymerase type-C family. DnaE2 subfamily.

The protein resides in the cytoplasm. The catalysed reaction is DNA(n) + a 2'-deoxyribonucleoside 5'-triphosphate = DNA(n+1) + diphosphate. DNA polymerase involved in damage-induced mutagenesis and translesion synthesis (TLS). It is not the major replicative DNA polymerase. This is Error-prone DNA polymerase from Ralstonia nicotianae (strain ATCC BAA-1114 / GMI1000) (Ralstonia solanacearum).